Reading from the N-terminus, the 261-residue chain is Thioesterase TesA (261 aa).

Catalysis depends on residues S104, D208, and H236.

Belongs to the thioesterase family.

It carries out the reaction a fatty acyl-CoA + H2O = a fatty acid + CoA + H(+). In terms of biological role, involved in the synthesis of both phthiocerol dimycocerosates (PDIMs) and phenolic glycolipids (PGLs), which are structurally related lipids non-covalently bound to the outer cell wall layer of M.tuberculosis and are important virulence factors. The sequence is that of Thioesterase TesA (tesA) from Mycobacterium leprae (strain TN).